The following is a 948-amino-acid chain: PHD finger protein 14 (948 aa).

The tract at residues 22–302 (DYDSSDDSDF…LSQSKSNEDS (281 aa)) is disordered. Phosphoserine is present on residues Ser-26 and Ser-29. Over residues 36–47 (ASDSEGSGNGSE) the composition is skewed to low complexity. Over residues 60–71 (DSEENILEEELN) the composition is skewed to acidic residues. Positions 72 to 85 (EDIKVKEEQLKNSA) are enriched in basic and acidic residues. Phosphoserine is present on residues Ser-84 and Ser-91. 2 stretches are compositionally biased toward basic and acidic residues: residues 95–110 (QLIK…NGER) and 117–139 (KEKE…EKAT). Low complexity predominate over residues 140–174 (VSENVAASAAATTPATSPPAVNTSPSVPTTTTATE). Ser-196 bears the Phosphoserine mark. 2 stretches are compositionally biased toward acidic residues: residues 199 to 212 (ELND…EDDN) and 233 to 256 (DGDN…EGND). Tyr-206 carries the phosphotyrosine modification. At Ser-208 the chain carries Phosphoserine. Thr-287 bears the Phosphothreonine mark. Residues 288-297 (NDSLTLSQSK) show a composition bias toward polar residues. Phosphoserine occurs at positions 290, 294, 298, 302, and 308. Residues 319 to 380 (ILICCVCLGD…PWFCDACKCG (62 aa)) form a PHD-type 1 zinc finger. Residues Cys-322, Cys-325, Cys-339, Cys-342, His-347, and Cys-350 each coordinate Zn(2+). The residue at position 359 (Ser-359) is a Phosphoserine. Residues Cys-374, Cys-377, Cys-385, Cys-388, His-405, Cys-408, Cys-441, Cys-444, Cys-458, Cys-463, His-468, Cys-471, Cys-495, and His-498 each coordinate Zn(2+). Residues 382–415 (SPSCELCPNQDGIFKETDAGRWVHIVCALYVPGV) form a C2HC pre-PHD-type zinc finger. The PHD-type 2 zinc-finger motif lies at 439 to 499 (KECSFCEDPR…PFFAYCKQHA (61 aa)). Ser-530 carries the post-translational modification Phosphoserine. The stretch at 630 to 678 (MIQIQENMAEQKNIKDKLENEQEKLHVEYNKLCESLEELQNLNGKLRSE) forms a coiled coil. Residue Glu-648 forms a Glycyl lysine isopeptide (Lys-Gly) (interchain with G-Cter in SUMO2) linkage. Gln-651 carries the post-translational modification Phosphoserine. A PHD-type 3 zinc finger spans residues 725–779 (LYSCGICKKNHDQHLLLLCDTCKLHYHLGCLDPPLTRMPRKTKNSYWQCSECDQA). 8 residues coordinate Zn(2+): Cys-728, Cys-731, Cys-743, Cys-746, His-751, Cys-754, Cys-773, and Cys-776. Phosphoserine occurs at positions 781, 782, and 835. Residues 811 to 862 (VPQDVPPEPKKIPIRNTRTRGRKRSFVPEEEKHEERVPRERRQRQSVLQKKP) are disordered. The span at 836–850 (FVPEEEKHEERVPRE) shows a compositional bias: basic and acidic residues. A PHD-type 4 zinc finger spans residues 868–921 (RTECATCKGTGDNENLVRCDECRLCYHFGCLDPPLKKSPKQTGYGWICQECDSS). Zn(2+) contacts are provided by Cys-871, Cys-874, Cys-886, Cys-889, His-894, Cys-897, Cys-915, and Cys-918. A disordered region spans residues 920–948 (SSSSKEDENEAERKNISQELNMEQKNPKK). Residues 922–935 (SSKEDENEAERKNI) show a composition bias toward basic and acidic residues. Positions 936 to 948 (SQELNMEQKNPKK) are enriched in polar residues.

The protein localises to the nucleus. It localises to the chromosome. The protein resides in the cytoplasm. In terms of biological role, histone-binding protein. Binds preferentially to unmodified histone H3 but can also bind to a lesser extent to histone H3 trimethylated at 'Lys-9' (H3K9me3) as well as to histone H3 monomethylated at 'Lys-27' (H3K27ac) and trimethylated at 'Lys-27' (H3K27me3). Represses PDGFRA expression, thus playing a role in regulation of mesenchymal cell proliferation. Suppresses the expression of CDKN1A/p21 by reducing the level of trimethylation of histone H3 'Lys-4', leading to enhanced proliferation of germinal center B cells. This is PHD finger protein 14 (PHF14) from Homo sapiens (Human).